Here is a 215-residue protein sequence, read N- to C-terminus: Adenylate kinase (215 aa).

10–15 is an ATP binding site; that stretch reads GAGKGT. The tract at residues 30 to 59 is NMP; it reads STGDMLRAAVKAGTELGLKAKSVMDAGNLV. AMP is bound by residues Thr31, Arg36, 57-59, 85-88, and Gln92; these read NLV and GFPR. The interval 122-159 is LID; it reads GRRVHEGSGRIYHTIFNPPKVEGVDDVTGESLVQRKDD. ATP-binding positions include Arg123 and 132-133; that span reads IY. Residues Arg156 and Arg167 each contribute to the AMP site. Gly201 is a binding site for ATP.

Belongs to the adenylate kinase family. Monomer.

The protein localises to the cytoplasm. The catalysed reaction is AMP + ATP = 2 ADP. It participates in purine metabolism; AMP biosynthesis via salvage pathway; AMP from ADP: step 1/1. In terms of biological role, catalyzes the reversible transfer of the terminal phosphate group between ATP and AMP. Plays an important role in cellular energy homeostasis and in adenine nucleotide metabolism. This chain is Adenylate kinase, found in Pseudomonas syringae pv. tomato (strain ATCC BAA-871 / DC3000).